A 427-amino-acid chain; its full sequence is Enolase (427 aa).

Residue Gln-163 coordinates (2R)-2-phosphoglycerate. Glu-205 (proton donor) is an active-site residue. Mg(2+) contacts are provided by Asp-242, Glu-285, and Asp-312. (2R)-2-phosphoglycerate-binding residues include Lys-337, Arg-366, Ser-367, and Lys-388. Lys-337 serves as the catalytic Proton acceptor.

It belongs to the enolase family. Mg(2+) serves as cofactor.

It is found in the cytoplasm. The protein resides in the secreted. Its subcellular location is the cell surface. It catalyses the reaction (2R)-2-phosphoglycerate = phosphoenolpyruvate + H2O. Its pathway is carbohydrate degradation; glycolysis; pyruvate from D-glyceraldehyde 3-phosphate: step 4/5. Functionally, catalyzes the reversible conversion of 2-phosphoglycerate (2-PG) into phosphoenolpyruvate (PEP). It is essential for the degradation of carbohydrates via glycolysis. This chain is Enolase, found in Burkholderia multivorans (strain ATCC 17616 / 249).